The sequence spans 401 residues: Membrane protein UL43 homolog (401 aa).

10 helical membrane-spanning segments follow: residues 43 to 63 (FVGI…IDLL), 67 to 87 (STCL…RVPI), 93 to 113 (IVTV…SVWV), 124 to 144 (LIVV…ISLF), 159 to 179 (ASLL…LVEL), 182 to 202 (VPIG…FGLA), 259 to 279 (PGVI…WIVL), 294 to 314 (YVVF…QLVI), 332 to 352 (AVCM…SLAF), and 379 to 399 (ISRW…ATII).

Belongs to the alphaherpesvirinae HHV-1 UL43 family.

It is found in the membrane. This chain is Membrane protein UL43 homolog, found in Equine herpesvirus 1 (strain Ab4p) (EHV-1).